Here is a 429-residue protein sequence, read N- to C-terminus: Adenylosuccinate synthetase (429 aa).

Residues 12 to 18 (GDEGKGK) and 40 to 42 (GHT) each bind GTP. Asp-13 (proton acceptor) is an active-site residue. Mg(2+) contacts are provided by Asp-13 and Gly-40. Residues 13-16 (DEGK), 38-41 (NAGH), Thr-129, Arg-143, Gln-223, Thr-238, and Arg-302 contribute to the IMP site. The active-site Proton donor is the His-41. A substrate-binding site is contributed by 298–304 (VVTGRKR). GTP contacts are provided by residues Arg-304, 330-332 (KLD), and 412-414 (STS).

Belongs to the adenylosuccinate synthetase family. Homodimer. It depends on Mg(2+) as a cofactor.

Its subcellular location is the cytoplasm. It catalyses the reaction IMP + L-aspartate + GTP = N(6)-(1,2-dicarboxyethyl)-AMP + GDP + phosphate + 2 H(+). The protein operates within purine metabolism; AMP biosynthesis via de novo pathway; AMP from IMP: step 1/2. In terms of biological role, plays an important role in the de novo pathway of purine nucleotide biosynthesis. Catalyzes the first committed step in the biosynthesis of AMP from IMP. The sequence is that of Adenylosuccinate synthetase from Brucella suis (strain ATCC 23445 / NCTC 10510).